Reading from the N-terminus, the 507-residue chain is Protein FAM221B (507 aa).

Disordered regions lie at residues 1 to 100 (MEAD…SAQS), 154 to 310 (LLSP…ESRP), and 486 to 507 (ETKRRGKRPYGTNTAKNRHRPF). Residues 88–100 (NLPSTPSQSSAQS) are compositionally biased toward polar residues. A compositionally biased stretch (acidic residues) spans 167 to 177 (SISDVQEEPLE). Residues 182–193 (ADISETEYSISD) show a composition bias toward polar residues. 2 stretches are compositionally biased toward acidic residues: residues 208-222 (PESEDYISDDHEEPL) and 270-281 (SADEEEAEEEEL). Phosphoserine is present on S270.

It belongs to the FAM221 family.

This chain is Protein FAM221B (Fam221b), found in Rattus norvegicus (Rat).